Consider the following 538-residue polypeptide: D-alanyl-D-alanine carboxypeptidase (538 aa).

The disordered stretch occupies residues 1-21 (MKQSSPEPLRPRRTGGRGGAR). An N-terminal signal peptide occupies residues 1 to 49 (MKQSSPEPLRPRRTGGRGGARRAAALVTIPLLPMTLLGASPALADASGA). Residue Ser-98 is the Acyl-ester intermediate of the active site. The active-site Proton acceptor is the Lys-101. The interval 146-319 (TLSAEDLDAM…KGDVGLGGVP (174 aa)) is absent in class-A beta-lactamases. Ser-347 is an active-site residue. Substrate is bound at residue Lys-459. Positions 516–538 (GARMMRGPVQGSGELECSWVQAC) are cleaved as a propeptide — removed in mature form.

Belongs to the peptidase S13 family.

The protein resides in the secreted. It carries out the reaction Preferential cleavage: (Ac)2-L-Lys-D-Ala-|-D-Ala. Also transpeptidation of peptidyl-alanyl moieties that are N-acyl substituents of D-alanine.. It participates in cell wall biogenesis; peptidoglycan biosynthesis. Its activity is regulated as follows. Inhibited by benzylpenicillin, cephaloridine, ampicillin and cetiofur. In terms of biological role, removes C-terminal D-alanyl residues from sugar-peptide cell wall precursors. The sequence is that of D-alanyl-D-alanine carboxypeptidase (dac) from Actinomadura sp. (strain R39).